Consider the following 679-residue polypeptide: Methionine--tRNA ligase (679 aa).

Positions 14–24 match the 'HIGH' region motif; the sequence is PYANGSIHLGH. Zn(2+) is bound by residues Cys145, Cys148, Cys158, and Cys161. The short motif at 331-335 is the 'KMSKS' region element; that stretch reads KMSKS. ATP is bound at residue Lys334. A tRNA-binding domain is found at 577-679; that stretch reads TFAAVDLRVA…SGAKPGQRIK (103 aa).

This sequence belongs to the class-I aminoacyl-tRNA synthetase family. MetG type 1 subfamily. As to quaternary structure, homodimer. Requires Zn(2+) as cofactor.

It is found in the cytoplasm. The catalysed reaction is tRNA(Met) + L-methionine + ATP = L-methionyl-tRNA(Met) + AMP + diphosphate. In terms of biological role, is required not only for elongation of protein synthesis but also for the initiation of all mRNA translation through initiator tRNA(fMet) aminoacylation. The protein is Methionine--tRNA ligase of Pseudomonas entomophila (strain L48).